Here is a 332-residue protein sequence, read N- to C-terminus: Acetyl-coenzyme A carboxylase carboxyl transferase subunit beta (332 aa).

The CoA carboxyltransferase N-terminal domain occupies 24–293 (LWIKCPDSGH…PEVIVESEPE (270 aa)). The tract at residues 288 to 332 (VESEPEPEPEPVVAEIIPPTSDLPVSAPAPAPVAAQTPAPAAPSA) is disordered. Positions 298–332 (PVVAEIIPPTSDLPVSAPAPAPVAAQTPAPAAPSA) are enriched in low complexity.

The protein belongs to the AccD/PCCB family. In terms of assembly, acetyl-CoA carboxylase is a heterohexamer composed of biotin carboxyl carrier protein (AccB), biotin carboxylase (AccC) and two subunits each of ACCase subunit alpha (AccA) and ACCase subunit beta (AccD).

Its subcellular location is the cytoplasm. The enzyme catalyses N(6)-carboxybiotinyl-L-lysyl-[protein] + acetyl-CoA = N(6)-biotinyl-L-lysyl-[protein] + malonyl-CoA. It functions in the pathway lipid metabolism; malonyl-CoA biosynthesis; malonyl-CoA from acetyl-CoA: step 1/1. Functionally, component of the acetyl coenzyme A carboxylase (ACC) complex. Biotin carboxylase (BC) catalyzes the carboxylation of biotin on its carrier protein (BCCP) and then the CO(2) group is transferred by the transcarboxylase to acetyl-CoA to form malonyl-CoA. This chain is Acetyl-coenzyme A carboxylase carboxyl transferase subunit beta, found in Rhodopseudomonas palustris (strain BisB18).